Consider the following 593-residue polypeptide: F-box/LRR-repeat protein 17 (593 aa).

Positions 120–177 constitute an F-box domain; sequence DLDLQLDTDIVQPGRFHAVGLWEVLKRLPPSSLLMAARVCKGWRETSRKMWKAAEELR. LRR repeat units follow at residues 178–206, 207–232, 237–262, 276–304, 335–361, 362–387, 414–439, 477–502, and 503–525; these read IRVP…SLKI, ESDF…EITT, VNRI…KMEG, LSTL…SLEF, SLKL…SLVL, GINI…DLSG, CPNI…DCGM, LSLW…NLNL, and CSNL…YASG.

As to quaternary structure, part of a SCF (ASK-cullin-F-box) protein ligase complex. Interacts with SKP1A/ASK1, KRP4, KRP6 and KRP7. As to expression, expressed in developing pollen.

The protein resides in the nucleus. The protein operates within protein modification; protein ubiquitination. Essential protein for male fertility. Component of the SCF(ASK-cullin-F-box) E3 ubiquitin ligase complex SCF(FBL17), which mediates the ubiquitination and subsequent proteasomal degradation of target proteins. Enables the switch in cell cycle control leading to male germ cell lineage formation from microspores after meiosis. Targets CDKA-1 inhibitors the degradation specifically in male germ cells (e.g. KRP6 and KRP7) and thus enables CDKA-1 activation and germ cell S-phase progression. Promotes twin sperm cell production and double fertilization. The protein is F-box/LRR-repeat protein 17 (FBL17) of Arabidopsis thaliana (Mouse-ear cress).